Here is a 331-residue protein sequence, read N- to C-terminus: MTPTVFLSILCLGVALAAPAPDYNLDAEWEEWKRSNDRTYSPEEEKQRRAVWEGNVKWIKQHIMENGLWMNNFTIEMNEFGDMTGEEMKMLTESSSYPLRNGKHIQKRNPKIPPTLDWRKEGYVTPVRRQGSCGACWAFSVTACIEGQLFKKTGKLIPLSVQNLMDCSVSYGTKGCDGGRPYDAFQYVKNNGGLEAEATYPYEAKAKHCRYRPERSVVKVNRFFVVPRNEEALLQALVTHGPIAVAIDGSHASFHSYRGGIYHEPKCRKDTLDHGLLLVGYGYEGHESENRKYWLLKNSHGERWGENGYMKLPRGQNNYCGIASYAMYPAL.

Positions 1–17 (MTPTVFLSILCLGVALA) are cleaved as a signal peptide. A propeptide spans 18 to 111 (APAPDYNLDA…GKHIQKRNPK (94 aa)) (activation peptide). The Nuclear localization signal motif lies at 33–50 (KRSNDRTYSPEEEKQRRA). N72 is a glycosylation site (N-linked (GlcNAc...) asparagine). 3 disulfides stabilise this stretch: C133/C176, C167/C209, and C267/C320. C136 is a catalytic residue. Active-site residues include H274 and N298.

Belongs to the peptidase C1 family. As to expression, expressed in placenta. Expressed in parietal and spiral artery-associated trophoblast giant cells, most abundantly during the phase of trophoblast invasion. From 14.5 dpc onwards, expressed at lower levels in labyrinth trophoblast cells. Expressed in trophoblast stem cells. Expressed in heart, liver and testis.

The protein localises to the endosome. It localises to the lysosome. It is found in the cytoplasm. Its subcellular location is the perinuclear region. The protein resides in the golgi apparatus. The protein localises to the nucleus. It localises to the secreted. It is found in the extracellular space. In terms of biological role, involved in trophoblast cell proliferation and differentiation probably by affecting mitotic cell cycle progression. Proteolytic activity and nuclear localization are essential for its role in cell cycle progression. In Mus musculus (Mouse), this protein is Cathepsin 7.